The following is a 72-amino-acid chain: Translation initiation factor IF-1 (72 aa).

The 72-residue stretch at 1-72 (MSKDDVIQMQ…SRARIVFRAK (72 aa)) folds into the S1-like domain.

The protein belongs to the IF-1 family. Component of the 30S ribosomal translation pre-initiation complex which assembles on the 30S ribosome in the order IF-2 and IF-3, IF-1 and N-formylmethionyl-tRNA(fMet); mRNA recruitment can occur at any time during PIC assembly.

Its subcellular location is the cytoplasm. Its function is as follows. One of the essential components for the initiation of protein synthesis. Stabilizes the binding of IF-2 and IF-3 on the 30S subunit to which N-formylmethionyl-tRNA(fMet) subsequently binds. Helps modulate mRNA selection, yielding the 30S pre-initiation complex (PIC). Upon addition of the 50S ribosomal subunit IF-1, IF-2 and IF-3 are released leaving the mature 70S translation initiation complex. The protein is Translation initiation factor IF-1 of Albidiferax ferrireducens (strain ATCC BAA-621 / DSM 15236 / T118) (Rhodoferax ferrireducens).